A 136-amino-acid chain; its full sequence is NADH-ubiquinone oxidoreductase chain 3 (136 aa).

3 helical membrane passes run 5–25, 55–75, and 85–105; these read TFFL…NLIF, ISFF…LLVY, and GIYG…GFAF.

It belongs to the complex I subunit 3 family.

The protein localises to the mitochondrion membrane. It carries out the reaction a ubiquinone + NADH + 5 H(+)(in) = a ubiquinol + NAD(+) + 4 H(+)(out). Its function is as follows. Core subunit of the mitochondrial membrane respiratory chain NADH dehydrogenase (Complex I) that is believed to belong to the minimal assembly required for catalysis. Complex I functions in the transfer of electrons from NADH to the respiratory chain. The immediate electron acceptor for the enzyme is believed to be ubiquinone. This Emericella nidulans (Aspergillus nidulans) protein is NADH-ubiquinone oxidoreductase chain 3 (nd3).